The following is a 997-amino-acid chain: NLR family CARD domain-containing protein 4 (997 aa).

Residues 1–88 (MDLIRKNYAE…FFYEDLIGQR (88 aa)) form the CARD domain. The segment at 95–300 (EEDLENLADH…RCGALIAETS (206 aa)) is nucleotide-binding domain (NBD). One can recognise an NACHT domain in the interval 165–478 (SPCVIEGEAG…VTKGEDFLNK (314 aa)). 171–178 (GEAGKGKT) is a binding site for ATP. The interval 358–465 (MNTQTTLFST…RLSQLLSSED (108 aa)) is winged-helix domain (WHD). LRR repeat units lie at residues 550–570 (LFSEKCLYINSHNISSHHIEF), 629–652 (NQSIQTLEVTLRDFHQLNKKDIKY), 708–731 (MTEMKTLSILNLHSEHLQGGLLEG), 735–758 (LVGLEKLVFHNIKIDKNDAKTLAE), 760–785 (ILSLKKLKRLSISHISNIGDGMESIA), 797–820 (ELKLIDCCLSAKALRSLGQSLYSL), 821–843 (SHIEILDLSGNYLLEEGKESVEE), 851–875 (LDAIRTLMLPGGTDVKFCLEAVLPT), 884–905 (ELAFKRWNLTNDDLMTLASYIN), 908–935 (FENLSFLDLSDNCAQSAGWLSLTAILQY), 937–958 (PNLTYVNFSTEDLFTPDPDLVR), and 972–994 (TMELNNWQLDDFDLAQIKKAKNM).

Its subcellular location is the cytoplasm. The protein resides in the cytosol. Functionally, key component of inflammasomes that indirectly senses specific proteins from pathogenic bacteria and fungi and responds by assembling an inflammasome complex that promotes caspase-1 activation, cytokine production and macrophage pyroptosis. This is NLR family CARD domain-containing protein 4 (nlrc4) from Xenopus tropicalis (Western clawed frog).